The sequence spans 300 residues: Phosphoenolpyruvate phosphomutase (300 aa).

A propeptide spanning residues 1-10 is cleaved from the precursor; sequence MLANSLKSFF. Catalysis depends on Asp66, which acts as the Nucleophile.

It belongs to the isocitrate lyase/PEP mutase superfamily. PEP mutase family.

It catalyses the reaction phosphoenolpyruvate + H(+) = 3-phosphonopyruvate. The protein operates within phosphorus metabolism; phosphonate biosynthesis. Functionally, formation of a carbon-phosphorus bond by converting phosphoenolpyruvate (PEP) to phosphonopyruvate (P-Pyr). This is Phosphoenolpyruvate phosphomutase (PEPM) from Tetrahymena pyriformis.